The chain runs to 359 residues: DNA ligase (359 aa).

Residues 32-35 (EIKY), R39, 55-57 (RVS), and E93 contribute to the ATP site. Catalysis depends on K34, which acts as the N6-AMP-lysine intermediate. E217 is a binding site for a divalent metal cation. ATP-binding residues include K232 and K238.

Belongs to the ATP-dependent DNA ligase family. The cofactor is a divalent metal cation.

The enzyme catalyses ATP + (deoxyribonucleotide)n-3'-hydroxyl + 5'-phospho-(deoxyribonucleotide)m = (deoxyribonucleotide)n+m + AMP + diphosphate.. Functionally, DNA ligase that seals nicks in double-stranded DNA during DNA replication, DNA recombination and DNA repair in an ATP-dependent reaction. Binds specifically to DNA nicks containing a 3'-OH and a 5'-phosphate group. The chain is DNA ligase from Escherichia phage T7 (Bacteriophage T7).